Consider the following 152-residue polypeptide: UPF0266 membrane protein YobD (152 aa).

The next 3 helical transmembrane spans lie at 6 to 26 (LLLI…QFIM), 45 to 65 (VDSV…VTSH), and 67 to 87 (AQMT…IFWI).

It belongs to the UPF0266 family.

It localises to the cell inner membrane. The chain is UPF0266 membrane protein YobD from Salmonella paratyphi C (strain RKS4594).